The chain runs to 115 residues: NADH-ubiquinone oxidoreductase chain 3 (115 aa).

The next 3 membrane-spanning stretches (helical) occupy residues 3-23 (FVLI…ITFW), 55-75 (FFLV…LLPL), and 84-104 (LPLM…SLAY).

Belongs to the complex I subunit 3 family. As to quaternary structure, core subunit of respiratory chain NADH dehydrogenase (Complex I) which is composed of 45 different subunits. Interacts with TMEM186. Interacts with TMEM242.

The protein localises to the mitochondrion inner membrane. It carries out the reaction a ubiquinone + NADH + 5 H(+)(in) = a ubiquinol + NAD(+) + 4 H(+)(out). Functionally, core subunit of the mitochondrial membrane respiratory chain NADH dehydrogenase (Complex I) which catalyzes electron transfer from NADH through the respiratory chain, using ubiquinone as an electron acceptor. Essential for the catalytic activity of complex I. The polypeptide is NADH-ubiquinone oxidoreductase chain 3 (Pan paniscus (Pygmy chimpanzee)).